The sequence spans 450 residues: Phosphoglucosamine mutase (450 aa).

The Phosphoserine intermediate role is filled by Ser-100. Mg(2+)-binding residues include Ser-100, Asp-240, Asp-242, and Asp-244. Residue Ser-100 is modified to Phosphoserine.

Belongs to the phosphohexose mutase family. It depends on Mg(2+) as a cofactor. Post-translationally, activated by phosphorylation.

The catalysed reaction is alpha-D-glucosamine 1-phosphate = D-glucosamine 6-phosphate. In terms of biological role, catalyzes the conversion of glucosamine-6-phosphate to glucosamine-1-phosphate. The polypeptide is Phosphoglucosamine mutase (Desulforudis audaxviator (strain MP104C)).